We begin with the raw amino-acid sequence, 493 residues long: Glutamyl-tRNA(Gln) amidotransferase subunit A (493 aa).

Active-site charge relay system residues include lysine 81 and serine 156. Catalysis depends on serine 180, which acts as the Acyl-ester intermediate.

This sequence belongs to the amidase family. GatA subfamily. As to quaternary structure, heterotrimer of A, B and C subunits.

It carries out the reaction L-glutamyl-tRNA(Gln) + L-glutamine + ATP + H2O = L-glutaminyl-tRNA(Gln) + L-glutamate + ADP + phosphate + H(+). Functionally, allows the formation of correctly charged Gln-tRNA(Gln) through the transamidation of misacylated Glu-tRNA(Gln) in organisms which lack glutaminyl-tRNA synthetase. The reaction takes place in the presence of glutamine and ATP through an activated gamma-phospho-Glu-tRNA(Gln). The chain is Glutamyl-tRNA(Gln) amidotransferase subunit A from Mycolicibacterium paratuberculosis (strain ATCC BAA-968 / K-10) (Mycobacterium paratuberculosis).